We begin with the raw amino-acid sequence, 343 residues long: N-acetyl-gamma-glutamyl-phosphate reductase (343 aa).

The active site involves cysteine 148.

Belongs to the NAGSA dehydrogenase family. Type 1 subfamily.

It is found in the cytoplasm. It carries out the reaction N-acetyl-L-glutamate 5-semialdehyde + phosphate + NADP(+) = N-acetyl-L-glutamyl 5-phosphate + NADPH + H(+). It functions in the pathway amino-acid biosynthesis; L-arginine biosynthesis; N(2)-acetyl-L-ornithine from L-glutamate: step 3/4. Functionally, catalyzes the NADPH-dependent reduction of N-acetyl-5-glutamyl phosphate to yield N-acetyl-L-glutamate 5-semialdehyde. The protein is N-acetyl-gamma-glutamyl-phosphate reductase of Caldicellulosiruptor saccharolyticus (strain ATCC 43494 / DSM 8903 / Tp8T 6331).